A 205-amino-acid polypeptide reads, in one-letter code: NADH-quinone oxidoreductase subunit I (205 aa).

4Fe-4S ferredoxin-type domains lie at 75 to 104 and 114 to 143; these read RLLE…METS and HEYT…HGGR. [4Fe-4S] cluster-binding residues include C84, C87, C90, C94, C123, C126, C129, and C133.

This sequence belongs to the complex I 23 kDa subunit family. In terms of assembly, NDH-1 is composed of 14 different subunits. Subunits NuoA, H, J, K, L, M, N constitute the membrane sector of the complex. [4Fe-4S] cluster serves as cofactor.

It localises to the cell inner membrane. The enzyme catalyses a quinone + NADH + 5 H(+)(in) = a quinol + NAD(+) + 4 H(+)(out). Functionally, NDH-1 shuttles electrons from NADH, via FMN and iron-sulfur (Fe-S) centers, to quinones in the respiratory chain. The immediate electron acceptor for the enzyme in this species is believed to be ubiquinone. Couples the redox reaction to proton translocation (for every two electrons transferred, four hydrogen ions are translocated across the cytoplasmic membrane), and thus conserves the redox energy in a proton gradient. The chain is NADH-quinone oxidoreductase subunit I from Wolinella succinogenes (strain ATCC 29543 / DSM 1740 / CCUG 13145 / JCM 31913 / LMG 7466 / NCTC 11488 / FDC 602W) (Vibrio succinogenes).